The sequence spans 752 residues: Iron-sulfur clusters transporter ABCB7, mitochondrial (752 aa).

The transit peptide at 1–22 (MALLAMHSWRWAAAAAAFEKRR) directs the protein to the mitochondrion. At 23-140 (HSAILIRPLV…KDRPDLRARV (118 aa)) the chain is on the mitochondrial matrix side. Positions 140-436 (VAISLGFLGG…LGTVYRETRQ (297 aa)) constitute an ABC transmembrane type-1 domain. A helical transmembrane segment spans residues 141-161 (AISLGFLGGAKAMNIVVPFMF). The Mitochondrial intermembrane segment spans residues 162 to 185 (KYAVDSLNQMSGNMLNLSDAPNTV). A helical transmembrane segment spans residues 186–206 (ATMATAVLIGYGVSRAGAAFF). Topologically, residues 207 to 259 (NEVRNAVFGKVAQNSIRRIAKNVFLHLHNLDLGFHLSRQTGALSKAIDRGTRG) are mitochondrial matrix. Residues K216 and K251 each carry the N6-acetyllysine modification. The helical transmembrane segment at 260-280 (ISFVLSALVFNLLPIMFEVML) threads the bilayer. Over 281–290 (VSGVLYYKCG) the chain is Mitochondrial intermembrane. Residues 291-311 (AQFALVTLGTLGTYTAFTVAV) traverse the membrane as a helical segment. At 312-382 (TRWRTRFRIE…TLAMLNFGQS (71 aa)) the chain is on the mitochondrial matrix side. Residue 315 to 319 (RTRFR) coordinates glutathione. A Phosphoserine modification is found at S336. Residue Y340 is modified to Phosphotyrosine. T342 is modified (phosphothreonine). Residue 378 to 381 (NFGQ) coordinates glutathione. Residues 383 to 403 (AIFSVGLTAIMVLASQGIVAG) form a helical membrane-spanning segment. The Mitochondrial intermembrane portion of the chain corresponds to 404–409 (TLTVGD). A helical membrane pass occupies residues 410–430 (LVMVNGLLFQLSLPLNFLGTV). G428 lines the glutathione pocket. The Mitochondrial matrix segment spans residues 431 to 752 (YRETRQALID…SVKGCGNCSC (322 aa)). The region spanning 472–706 (VAFDNVHFEY…PHSIYSEMWH (235 aa)) is the ABC transporter domain. ATP contacts are provided by residues Y481 and 505–516 (GGSGSGKSTIVR).

The protein belongs to the ABC transporter superfamily. ABCB family. Heavy Metal importer (TC 3.A.1.210) subfamily. In terms of assembly, homodimer or heterodimer. Interacts with C10orf88/PAAT. Forms a complex with ABCB10 and FECH, where a dimeric FECH bridges ABCB7 and ABCB10 homodimers; this complex may be required for cellular iron homeostasis, mitochondrial function and heme biosynthesis. Interacts with FECH. Interacts with ATP5F1A. Interacts with COX4I1; this interaction allows the regulation of cellular iron homeostasis and cellular reactive oxygen species (ROS) levels in cardiomyocytes.

The protein resides in the mitochondrion inner membrane. It carries out the reaction (glutathione)4[2Fe(III)-2S] cluster(in) + ATP + H2O = (glutathione)4[2Fe(III)-2S] cluster(out) + ADP + phosphate + H(+). ATPase activity is stimulated by glutathione. In terms of biological role, exports glutathione-coordinated iron-sulfur clusters such as [2Fe-2S]-(GS)4 cluster from the mitochondria to the cytosol in an ATP-dependent manner allowing the assembly of the cytosolic iron-sulfur (Fe/S) cluster-containing proteins and participates in iron homeostasis. Moreover, through a functional complex formed of ABCB7, FECH and ABCB10, also plays a role in the cellular iron homeostasis, mitochondrial function and heme biosynthesis. In cardiomyocytes, regulates cellular iron homeostasis and cellular reactive oxygen species (ROS) levels through its interaction with COX4I1. May also play a role in hematopoiesis. This is Iron-sulfur clusters transporter ABCB7, mitochondrial from Homo sapiens (Human).